Here is a 494-residue protein sequence, read N- to C-terminus: MDKILYDALTFDDVLLVPAYSNVLPKETVVKSRVTRNIEVNLPLVSAAMDTVTEAELAIALARAGGIGIIHKNLSIDVQARHVAKVKRFESGIIRNPITLFEDATIQEAIDLMLRHSISGIPVVERPTPEGCLLLKGIVTNRDLRMTTSSNEKITTIMTTDLITAQEDIDLLAAEEILMQNKIEKLLVIDEEGYLKGLITFKDIQKRKQCPDACKDMHGRLRVGAAVGIRSNTITRVDALVEAGVDVVAVDTAHGHSQAVLDMVATIKEKYPELEVIAGNVATPEAVRDLVKAGADAVKVGIGPGSICTTRVVAGVGMPQLTAIMNCAKEAAKTDTPIIADGGIKYSGDISKALAAGADTVMMGSIFAGTDESPGETILYEGRRFKAYRGMGSLGAMSEPEGSSDRYFQDASAETKKYVPEGIEGRIPAKGPLDEVVYQLIGGLKSSMGYCGVKNIEELKKNTRFVRITSAGLRESHPHDVMITREAPNYSTSH.

2 consecutive CBS domains span residues 93–154 (IIRN…NEKI) and 158–217 (MTTD…CKDM). Residues D251 and 301–303 (GIG) contribute to the NAD(+) site. Residues G303 and G305 each coordinate K(+). S306 contributes to the IMP binding site. C308 contacts K(+). Residue C308 is the Thioimidate intermediate of the active site. IMP is bound by residues 341-343 (DGG), 364-365 (GS), and 388-392 (YRGMG). R406 serves as the catalytic Proton acceptor. Position 421 (E421) interacts with IMP. 3 residues coordinate K(+): E475, S476, and H477.

It belongs to the IMPDH/GMPR family. In terms of assembly, homotetramer. It depends on K(+) as a cofactor.

It carries out the reaction IMP + NAD(+) + H2O = XMP + NADH + H(+). It participates in purine metabolism; XMP biosynthesis via de novo pathway; XMP from IMP: step 1/1. Mycophenolic acid (MPA) is a non-competitive inhibitor that prevents formation of the closed enzyme conformation by binding to the same site as the amobile flap. In contrast, mizoribine monophosphate (MZP) is a competitive inhibitor that induces the closed conformation. MPA is a potent inhibitor of mammalian IMPDHs but a poor inhibitor of the bacterial enzymes. MZP is a more potent inhibitor of bacterial IMPDH. In terms of biological role, catalyzes the conversion of inosine 5'-phosphate (IMP) to xanthosine 5'-phosphate (XMP), the first committed and rate-limiting step in the de novo synthesis of guanine nucleotides, and therefore plays an important role in the regulation of cell growth. The protein is Inosine-5'-monophosphate dehydrogenase of Chlorobaculum parvum (strain DSM 263 / NCIMB 8327) (Chlorobium vibrioforme subsp. thiosulfatophilum).